Consider the following 293-residue polypeptide: Small ribosomal subunit biogenesis GTPase RsgA (293 aa).

Positions 63-223 constitute a CP-type G domain; sequence QNELVRPPVA…VADTPGFSAL (161 aa). GTP-binding positions include 112-115 and 166-174; these read SKID and GQSGVGKSS. Residues Cys-247, Cys-252, His-254, and Cys-260 each contribute to the Zn(2+) site.

This sequence belongs to the TRAFAC class YlqF/YawG GTPase family. RsgA subfamily. Monomer. Associates with 30S ribosomal subunit, binds 16S rRNA. Requires Zn(2+) as cofactor.

It is found in the cytoplasm. Its function is as follows. One of several proteins that assist in the late maturation steps of the functional core of the 30S ribosomal subunit. Helps release RbfA from mature subunits. May play a role in the assembly of ribosomal proteins into the subunit. Circularly permuted GTPase that catalyzes slow GTP hydrolysis, GTPase activity is stimulated by the 30S ribosomal subunit. The polypeptide is Small ribosomal subunit biogenesis GTPase RsgA (Geobacillus thermodenitrificans (strain NG80-2)).